The following is a 73-amino-acid chain: Large ribosomal subunit protein bL31 (73 aa).

This sequence belongs to the bacterial ribosomal protein bL31 family. Type A subfamily. As to quaternary structure, part of the 50S ribosomal subunit.

Its function is as follows. Binds the 23S rRNA. This chain is Large ribosomal subunit protein bL31, found in Synechococcus sp. (strain JA-3-3Ab) (Cyanobacteria bacterium Yellowstone A-Prime).